The primary structure comprises 187 residues: Pyridoxal 5'-phosphate synthase subunit PdxT (187 aa).

Position 47 to 49 (47 to 49 (GES)) interacts with L-glutamine. C76 serves as the catalytic Nucleophile. L-glutamine contacts are provided by residues R102 and 128–129 (IR). Active-site charge relay system residues include H165 and E167.

The protein belongs to the glutaminase PdxT/SNO family. In terms of assembly, in the presence of PdxS, forms a dodecamer of heterodimers. Only shows activity in the heterodimer.

The catalysed reaction is aldehydo-D-ribose 5-phosphate + D-glyceraldehyde 3-phosphate + L-glutamine = pyridoxal 5'-phosphate + L-glutamate + phosphate + 3 H2O + H(+). It carries out the reaction L-glutamine + H2O = L-glutamate + NH4(+). The protein operates within cofactor biosynthesis; pyridoxal 5'-phosphate biosynthesis. Its function is as follows. Catalyzes the hydrolysis of glutamine to glutamate and ammonia as part of the biosynthesis of pyridoxal 5'-phosphate. The resulting ammonia molecule is channeled to the active site of PdxS. This chain is Pyridoxal 5'-phosphate synthase subunit PdxT, found in Methanococcus vannielii (strain ATCC 35089 / DSM 1224 / JCM 13029 / OCM 148 / SB).